Consider the following 477-residue polypeptide: Zinc metalloproteinase/disintegrin (477 aa).

Residues 1–20 (MIEVLLVTICLAAFPYQGSS) form the signal peptide. The propeptide occupies 21-187 (IILESGNVND…PIKKASQSNL (167 aa)). One can recognise a Peptidase M12B domain in the interval 193–389 (RYIELFLVVD…DNPQCILNKQ (197 aa)). Ca(2+) contacts are provided by Glu-196 and Asp-280. Disulfide bonds link Cys-304–Cys-384, Cys-344–Cys-368, and Cys-346–Cys-351. Residue His-329 coordinates Zn(2+). Residue Glu-330 is part of the active site. Positions 333 and 339 each coordinate Zn(2+). Residues Cys-384 and Asn-387 each coordinate Ca(2+). Positions 390–404 (LRTDTVSTPVSGKNF) are excised as a propeptide. Residues 396-477 (STPVSGKNFG…AGCPRNPFHA (82 aa)) enclose the Disintegrin domain. 6 cysteine pairs are disulfide-bonded: Cys-410/Cys-425, Cys-412/Cys-420, Cys-419/Cys-442, Cys-433/Cys-439, Cys-438/Cys-463, and Cys-451/Cys-470. Positions 455–457 (RGD) match the Cell attachment site motif.

The protein belongs to the venom metalloproteinase (M12B) family. P-II subfamily. P-IIa sub-subfamily. As to quaternary structure, monomer. Zn(2+) serves as cofactor. In terms of tissue distribution, expressed by the venom gland.

It is found in the secreted. Inhibited by 1,10-phenanthroline and EDTA. Functionally, impairs hemostasis in the envenomed animal. Does not exhibit detectable plasminogen activating activity. Has hemagglutinating activity on red blood cells. Cleaves insulin B chain at '38-Ala-|-Leu-39' and '40-Tyr-|-Leu-41' bonds. Its function is as follows. This recombinant protein shows high inhibitory activity on collagen-induced platelet aggregation. This chain is Zinc metalloproteinase/disintegrin, found in Bothrops jararaca (Jararaca).